A 192-amino-acid chain; its full sequence is Imidazole glycerol phosphate synthase subunit HisH (192 aa).

The 192-residue stretch at 1-192 (MIAIIDYGLG…QALKGGFIND (192 aa)) folds into the Glutamine amidotransferase type-1 domain. The active-site Nucleophile is C77. Active-site residues include H169 and E171.

As to quaternary structure, heterodimer of HisH and HisF.

Its subcellular location is the cytoplasm. It catalyses the reaction 5-[(5-phospho-1-deoxy-D-ribulos-1-ylimino)methylamino]-1-(5-phospho-beta-D-ribosyl)imidazole-4-carboxamide + L-glutamine = D-erythro-1-(imidazol-4-yl)glycerol 3-phosphate + 5-amino-1-(5-phospho-beta-D-ribosyl)imidazole-4-carboxamide + L-glutamate + H(+). It carries out the reaction L-glutamine + H2O = L-glutamate + NH4(+). The protein operates within amino-acid biosynthesis; L-histidine biosynthesis; L-histidine from 5-phospho-alpha-D-ribose 1-diphosphate: step 5/9. Its function is as follows. IGPS catalyzes the conversion of PRFAR and glutamine to IGP, AICAR and glutamate. The HisH subunit catalyzes the hydrolysis of glutamine to glutamate and ammonia as part of the synthesis of IGP and AICAR. The resulting ammonia molecule is channeled to the active site of HisF. This is Imidazole glycerol phosphate synthase subunit HisH from Staphylococcus epidermidis (strain ATCC 35984 / DSM 28319 / BCRC 17069 / CCUG 31568 / BM 3577 / RP62A).